Reading from the N-terminus, the 286-residue chain is 2-dehydro-3-deoxyphosphooctonate aldolase (286 aa).

This sequence belongs to the KdsA family.

It localises to the cytoplasm. It carries out the reaction D-arabinose 5-phosphate + phosphoenolpyruvate + H2O = 3-deoxy-alpha-D-manno-2-octulosonate-8-phosphate + phosphate. It functions in the pathway carbohydrate biosynthesis; 3-deoxy-D-manno-octulosonate biosynthesis; 3-deoxy-D-manno-octulosonate from D-ribulose 5-phosphate: step 2/3. Its pathway is bacterial outer membrane biogenesis; lipopolysaccharide biosynthesis. The sequence is that of 2-dehydro-3-deoxyphosphooctonate aldolase (kdsA) from Actinobacillus pleuropneumoniae (Haemophilus pleuropneumoniae).